Reading from the N-terminus, the 391-residue chain is MRAERWSQTVRQIRSPRALRVIPLTALMLISGCGEKEQVSSATPPPDVGVYTVRAQALTLTTDLPGRTSAFRVAEVRPQVSGILQKRSFVEGAEVKLGQQLYQIDPRTYEAQLRRAEANRTSAQNLARRYETLLKTKAVSKQQYDDALAAWKQAEADYQVARIDVQYTRVLSPISGRIGRSTVTEGALVTNGQAQSLATVTQLDPIYVDVTQPITKLLGLQKALESGRLQKTGENQAEVSLTLDDGSAYPLPGTLKFSEVSVDPTTGSVTLRAEFPNPNRKLLPGMFVHALLKEGVQNAAILVPQQAISRDTRGVPSVWVVKADNTVESREIQTLRTVGNAWLISNGVTEGERIITEGVQRVRSGIAVNAVEAKNVNLVDGFAATTEASAN.

The signal sequence occupies residues 1 to 32; sequence MRAERWSQTVRQIRSPRALRVIPLTALMLISG. Cysteine 33 is lipidated: N-palmitoyl cysteine. Cysteine 33 carries S-diacylglycerol cysteine lipidation. Positions 107–136 form a coiled coil; it reads RTYEAQLRRAEANRTSAQNLARRYETLLKT.

Belongs to the membrane fusion protein (MFP) (TC 8.A.1) family.

Its subcellular location is the cell inner membrane. Its function is as follows. The periplasmic linker component of an organic solvent efflux pump. Involved in export of a number of organic solvents, including toluene and styrene. This is the most important solvent efflux pump in this strain, although it can export AMP and some antibiotics. This is Toluene efflux pump periplasmic linker protein TtgG (ttgG) from Pseudomonas putida (strain DOT-T1E).